Reading from the N-terminus, the 441-residue chain is Divalent metal cation transporter MntH (441 aa).

11 helical membrane-spanning segments follow: residues 41–61 (TGIA…IGYM), 74–94 (AAYG…AMLF), 116–136 (HFPA…AMAT), 141–161 (FLGG…AGMI), 183–203 (AAIA…LMIA), 223–243 (AALT…TLYL), 271–291 (VVVA…MAAS), 311–331 (IPVL…TSGV), 360–380 (AVTI…TRAM), 381–401 (VASQ…LLIL), and 419–439 (IVAG…VWAA).

This sequence belongs to the NRAMP family.

The protein localises to the cell inner membrane. Its function is as follows. H(+)-stimulated, divalent metal cation uptake system. The protein is Divalent metal cation transporter MntH of Burkholderia ambifaria (strain ATCC BAA-244 / DSM 16087 / CCUG 44356 / LMG 19182 / AMMD) (Burkholderia cepacia (strain AMMD)).